Here is a 381-residue protein sequence, read N- to C-terminus: Chaperone protein DnaJ (381 aa).

The J domain occupies 5 to 70; it reads DYYEVLGVSR…DKKAAYDRYG (66 aa). The CR-type zinc-finger motif lies at 140–218; sequence GVQKTINVPA…CHGAGRVEKE (79 aa). Zn(2+)-binding residues include C153, C156, C170, C173, C192, C195, C206, and C209. CXXCXGXG motif repeat units follow at residues 153–160, 170–177, 192–199, and 206–213; these read CDACKGTG, CPTCSGMG, CPTCNGMG, and CKVCHGAG.

The protein belongs to the DnaJ family. Homodimer. Requires Zn(2+) as cofactor.

The protein localises to the cytoplasm. Its function is as follows. Participates actively in the response to hyperosmotic and heat shock by preventing the aggregation of stress-denatured proteins and by disaggregating proteins, also in an autonomous, DnaK-independent fashion. Unfolded proteins bind initially to DnaJ; upon interaction with the DnaJ-bound protein, DnaK hydrolyzes its bound ATP, resulting in the formation of a stable complex. GrpE releases ADP from DnaK; ATP binding to DnaK triggers the release of the substrate protein, thus completing the reaction cycle. Several rounds of ATP-dependent interactions between DnaJ, DnaK and GrpE are required for fully efficient folding. Also involved, together with DnaK and GrpE, in the DNA replication of plasmids through activation of initiation proteins. The protein is Chaperone protein DnaJ of Cereibacter sphaeroides (strain KD131 / KCTC 12085) (Rhodobacter sphaeroides).